A 118-amino-acid chain; its full sequence is HTH-type transcriptional regulator SarT (118 aa).

Residues 55 to 78 (MRDIISYIGIDQSRIVKSVKELSK) constitute a DNA-binding region (H-T-H motif).

Belongs to the SarA family.

The protein resides in the cytoplasm. In terms of biological role, transcriptional regulator acting as an intermediary between major regulators SarA and agr and virulence genes. Represses alpha-hemolysin (hla) gene expression. This chain is HTH-type transcriptional regulator SarT (sarT), found in Staphylococcus aureus (strain Mu50 / ATCC 700699).